We begin with the raw amino-acid sequence, 471 residues long: MFAFYFLTACTTLKGVFGVSPSYNGLGLTPQMGWDSWNTFACDVSEQLLLDTADRISDLGLKDMGYKYVILDDCWSSGRDSDGFLVADKHKFPNGMGHVADHLHNNSFLFGMYSSAGEYTCAGYPGSLGREEEDAQFFANNRVDYLKYDNCYNKGQFGTPDVSYHRYKAMSDALNKTGRPIFYSLCNWGQDLTFYWGSGIANSWRMSGDITAEFTRPDSRCPCDGDEYDCKYAGFHCSIMNILNKAAPMGQNAGVGGWNDLDNLEVGVGNLTDDEEKAHFSMWAMVKSPLIIGADVNHLKASSYSIYSQASVIAINQDPKGIPATRVWRYYVSDTDEYGQGEIQMWSGPLDNGDQVVALLNGGSVARPMNTTLEEIFFDSNLGSKELTSTWDIYDLWANRVDNSTASAILEQNKAATGILYNATEQSYKDGLSKNDTRLFGQKIGSLSPNAILNTTVPAHGIAFYRLRPSA.

The signal sequence occupies residues 1–18; sequence MFAFYFLTACTTLKGVFG. The cysteines at positions 42 and 74 are disulfide-linked. Asp-72 and Asp-73 together coordinate substrate. A glycan (N-linked (GlcNAc...) asparagine) is linked at Asn-105. Cys-121 and Cys-151 are oxidised to a cystine. Residue Lys-147 participates in substrate binding. Residue Asp-149 is the Nucleophile of the active site. Asn-175 carries an N-linked (GlcNAc...) asparagine glycan. Arg-205 contacts substrate. The active-site Proton donor is the Asp-209. 2 cysteine pairs are disulfide-bonded: Cys-221-Cys-237 and Cys-223-Cys-230. Residue Gln-251 coordinates substrate. Asn-270, Asn-370, Asn-403, Asn-422, Asn-435, and Asn-454 each carry an N-linked (GlcNAc...) asparagine glycan.

It belongs to the glycosyl hydrolase 27 family. As to quaternary structure, homotetramer.

It is found in the secreted. The enzyme catalyses Hydrolysis of terminal, non-reducing alpha-D-galactose residues in alpha-D-galactosides, including galactose oligosaccharides, galactomannans and galactolipids.. The protein is Alpha-galactosidase 5 (MEL5) of Saccharomyces cerevisiae (Baker's yeast).